Here is a 90-residue protein sequence, read N- to C-terminus: Probable Fe(2+)-trafficking protein (90 aa).

The protein belongs to the Fe(2+)-trafficking protein family.

Its function is as follows. Could be a mediator in iron transactions between iron acquisition and iron-requiring processes, such as synthesis and/or repair of Fe-S clusters in biosynthetic enzymes. This chain is Probable Fe(2+)-trafficking protein, found in Pseudomonas fluorescens (strain ATCC BAA-477 / NRRL B-23932 / Pf-5).